We begin with the raw amino-acid sequence, 404 residues long: Cysteine desulfurase IscS (404 aa).

Residues 75 to 76, Asn-155, Gln-183, and 203 to 205 contribute to the pyridoxal 5'-phosphate site; these read AT and SGH. The residue at position 206 (Lys-206) is an N6-(pyridoxal phosphate)lysine. Residue Thr-243 participates in pyridoxal 5'-phosphate binding. The active-site Cysteine persulfide intermediate is the Cys-328. Cys-328 contributes to the [2Fe-2S] cluster binding site.

This sequence belongs to the class-V pyridoxal-phosphate-dependent aminotransferase family. NifS/IscS subfamily. Homodimer. Forms a heterotetramer with IscU, interacts with other sulfur acceptors. Pyridoxal 5'-phosphate is required as a cofactor.

It is found in the cytoplasm. It carries out the reaction (sulfur carrier)-H + L-cysteine = (sulfur carrier)-SH + L-alanine. It participates in cofactor biosynthesis; iron-sulfur cluster biosynthesis. Master enzyme that delivers sulfur to a number of partners involved in Fe-S cluster assembly, tRNA modification or cofactor biosynthesis. Catalyzes the removal of elemental sulfur atoms from cysteine to produce alanine. Functions as a sulfur delivery protein for Fe-S cluster synthesis onto IscU, an Fe-S scaffold assembly protein, as well as other S acceptor proteins. The polypeptide is Cysteine desulfurase IscS (Shewanella amazonensis (strain ATCC BAA-1098 / SB2B)).